Consider the following 306-residue polypeptide: MLIRHAPDLTDNDVTDHSLYLKRRTLMAGVAGLGVAGASASHAQAGLTFSRGFSTTEKPTSKEDITTYNNFYEFGVDKSDPAENSGKFKPRPWTVRIDGACEAPRTVGIEDLIGKNKLEERIYRMRCVEGWSMVIPWVGFPLKDLLASVKPTSKAKFVAFETVMRPSEMPGQAWNTLDWPYREGLRIDEAMHPLTLMAVGLYGDVLPNQNGAPLRLVVPWKYGFKGIKSIVRISLVEKQPVTSWNVLAPREYGFYSNVNPAVDHPRWSQATERRIGEFRRRETLAFNGYGEWVADMYRSMDLKRFY.

Residues 1-45 constitute a signal peptide (tat-type signal); sequence MLIRHAPDLTDNDVTDHSLYLKRRTLMAGVAGLGVAGASASHAQA. Residues N69, 72–73, C127, T162, N210, R215, and 226–228 contribute to the Mo-molybdopterin site; these read YE and GIK.

This sequence belongs to the MsrP family. Heterodimer of a catalytic subunit (MsrP) and a heme-binding subunit (MsrQ). Mo-molybdopterin serves as cofactor. Post-translationally, predicted to be exported by the Tat system. The position of the signal peptide cleavage has not been experimentally proven.

It is found in the periplasm. It catalyses the reaction L-methionyl-[protein] + a quinone + H2O = L-methionyl-(S)-S-oxide-[protein] + a quinol. The enzyme catalyses L-methionyl-[protein] + a quinone + H2O = L-methionyl-(R)-S-oxide-[protein] + a quinol. Its function is as follows. Part of the MsrPQ system that repairs oxidized periplasmic proteins containing methionine sulfoxide residues (Met-O), using respiratory chain electrons. Thus protects these proteins from oxidative-stress damage caused by reactive species of oxygen and chlorine generated by the host defense mechanisms. MsrPQ is essential for the maintenance of envelope integrity under bleach stress, rescuing a wide series of structurally unrelated periplasmic proteins from methionine oxidation. The catalytic subunit MsrP is non-stereospecific, being able to reduce both (R-) and (S-) diastereoisomers of methionine sulfoxide. This is Protein-methionine-sulfoxide reductase catalytic subunit MsrP from Caulobacter vibrioides (strain ATCC 19089 / CIP 103742 / CB 15) (Caulobacter crescentus).